Consider the following 214-residue polypeptide: cAMP-activated global transcriptional regulator Vfr (214 aa).

3',5'-cyclic AMP-binding positions include 59-60, 73-75, 87-88, 132-133, R179, and R185; these read RE, GEL, RS, and TT. An HTH crp-type domain is found at 142-214; that stretch reads LDVTGRVART…GKTMVVFGTR (73 aa). The H-T-H motif DNA-binding region spans 174–193; that stretch reads RQEIGRIVGCSREMVGRVLK.

In terms of assembly, homodimer.

Its function is as follows. Global cAMP-dependent transcriptional regulator that controls virulence gene expression by distinct cAMP-dependent and -independent mechanisms, which allow to fine tune its virulence program in response to specific host cues or environments. Controls the expression of many regulatory targets including type II, type III and type IV secretion systems, flagellar-mediated motility, and quorum sensing systems. Transcriptional control is exerted by binding to a well-characterized consensus site (5'-ANWWTGNGAWNYAGWTCACAT) within target promoters. Directly binds to the toxA upstream region to regulate exotoxin A production, to the lasR gene promoter to activate the las quorum-sensing system or to the exsA promoter to regulate type III secretion system. Autoregulates as well its own expression. In Pseudomonas aeruginosa (strain ATCC 15692 / DSM 22644 / CIP 104116 / JCM 14847 / LMG 12228 / 1C / PRS 101 / PAO1), this protein is cAMP-activated global transcriptional regulator Vfr (vfr).